Reading from the N-terminus, the 201-residue chain is Orotate phosphoribosyltransferase (201 aa).

113 to 121 (EDIITTGKS) contributes to the 5-phospho-alpha-D-ribose 1-diphosphate binding site. The orotate site is built by Thr-117 and Arg-145.

Belongs to the purine/pyrimidine phosphoribosyltransferase family. PyrE subfamily. In terms of assembly, homodimer. Mg(2+) is required as a cofactor.

The enzyme catalyses orotidine 5'-phosphate + diphosphate = orotate + 5-phospho-alpha-D-ribose 1-diphosphate. It participates in pyrimidine metabolism; UMP biosynthesis via de novo pathway; UMP from orotate: step 1/2. Catalyzes the transfer of a ribosyl phosphate group from 5-phosphoribose 1-diphosphate to orotate, leading to the formation of orotidine monophosphate (OMP). The protein is Orotate phosphoribosyltransferase of Helicobacter pylori (strain ATCC 700392 / 26695) (Campylobacter pylori).